We begin with the raw amino-acid sequence, 715 residues long: Dipeptidyl-peptidase 7 (715 aa).

The signal sequence occupies residues 1 to 22 (MRKLIFSLVTSFFLLLPSVIRA). Catalysis depends on charge relay system residues His-87, Asp-223, and Ser-650.

The protein belongs to the peptidase S46 family.

Functionally, catalyzes the removal of dipeptides from the N-terminus of oligopeptides. Most potently cleaves the synthetic substrate Met-Leu-methylcoumaryl-7-amide (Met-Leu-MCA), followed by Lys-Ala-, Leu-Arg- &gt; Leu-Asp-, Leu-Glu-, &gt;Leu-Lys, and &gt;Val-Arg-MCA, while this enzyme does not hydrolyze Gly-Arg-, Gly-Gly-, Lys-Lys-, or Gly-Pro-MCA. The sequence is that of Dipeptidyl-peptidase 7 (dpp7) from Capnocytophaga gingivalis.